A 499-amino-acid polypeptide reads, in one-letter code: MLERPPALAMPMPTEGTPPPLSGTPIPVPAYFRHAEPGFSLKRPRGLSRSLPPPPPAKGSIPISRLFPPRTPGWHQLQPRRVSFRGEASETLQSPGYDPSRPESFFQQSFQRLSRLGHGSYGEVFKVRSKEDGRLYAVKRSMSPFRGPKDRARKLAEVGSHEKVGQHPCCVRLEQAWEEGGILYLQTELCGPSLQQHCEAWGASLPEAQVWGYLRDTLLALAHLHSQGLVHLDVKPANIFLGPRGRCKLGDFGLLVELGTAGAGEVQEGDPRYMAPELLQGSYGTAADVFSLGLTILEVACNMELPHGGEGWQQLRQGYLPPEFTAGLSSELRSVLVMMLEPDPKLRATAEALLALPVLRQPRAWGVLWCMAAEALSRGWALWQALLALLCWLWHGLAHPASWLQPLGPPATPPGSPPCSLLLDSSLSSNWDDDSLGPSLSPEAVLARTVGSTSTPRSRCTPRDALDLSDINSEPPRGSFPSFEPRNLLSLFEDTLDPT.

Met-1 is subject to N-acetylmethionine. Positions 1–29 are disordered; it reads MLERPPALAMPMPTEGTPPPLSGTPIPVP. A compositionally biased stretch (pro residues) spans 16–28; that stretch reads GTPPPLSGTPIPV. The residue at position 17 (Thr-17) is a Phosphothreonine. A Phosphoserine modification is found at Ser-40. The tract at residues 42–72 is disordered; it reads KRPRGLSRSLPPPPPAKGSIPISRLFPPRTP. Phosphoserine is present on residues Ser-94 and Ser-120. The Protein kinase domain occupies 110 to 359; it reads FQRLSRLGHG…AEALLALPVL (250 aa). Residues 116 to 124 and Lys-139 each bind ATP; that span reads LGHGSYGEV. 2 positions are modified to phosphoserine: Ser-143 and Ser-160. The active-site Proton acceptor is Asp-233. 3 residues coordinate Mg(2+): Asn-238, Asp-251, and Gly-253. A Membrane-association motif motif is present at residues 382–398; sequence LWQALLALLCWLWHGLA. The segment at 398-499 is interaction with PIN1; it reads AHPASWLQPL…SLFEDTLDPT (102 aa). At Ser-426 the chain carries Phosphoserine; by PLK1. Residues 437–499 form an interaction with CDC2-CCNB1 region; that stretch reads GPSLSPEAVL…SLFEDTLDPT (63 aa). The interval 451-485 is disordered; sequence GSTSTPRSRCTPRDALDLSDINSEPPRGSFPSFEP. 3 positions are modified to phosphoserine: Ser-469, Ser-473, and Ser-482. Phosphothreonine; by PLK1 is present on Thr-495.

Belongs to the protein kinase superfamily. Ser/Thr protein kinase family. WEE1 subfamily. As to quaternary structure, interacts with CDC2-CCNB1 complex. Can also interact with PIN1 when phosphorylated by CDC2-CCNB1. Post-translationally, autophosphorylated. Phosphorylated by CDC2-CCNB1 complexes on undefined serine and threonine residues. The phosphorylation by CDC2-CCNB1 complexes may inhibit the catalytic activity.

Its subcellular location is the endoplasmic reticulum membrane. The protein resides in the golgi apparatus membrane. The catalysed reaction is L-seryl-[protein] + ATP = O-phospho-L-seryl-[protein] + ADP + H(+). It catalyses the reaction L-threonyl-[protein] + ATP = O-phospho-L-threonyl-[protein] + ADP + H(+). Negatively regulated by hyperphosphorylation during mitosis. The hyperphosphorylated form does not associate with CCNB1-CDC2 complexes. The PLK1 protein kinase may be required for mitotic phosphorylation. Its function is as follows. Acts as a negative regulator of entry into mitosis (G2 to M transition) by phosphorylation of the CDK1 kinase specifically when CDK1 is complexed to cyclins. Mediates phosphorylation of CDK1 predominantly on 'Thr-14'. Also involved in Golgi fragmentation. May be involved in phosphorylation of CDK1 on 'Tyr-15' to a lesser degree, however tyrosine kinase activity is unclear and may be indirect. In Homo sapiens (Human), this protein is Membrane-associated tyrosine- and threonine-specific cdc2-inhibitory kinase (PKMYT1).